A 197-amino-acid polypeptide reads, in one-letter code: Large ribosomal subunit protein uL22 (197 aa).

A disordered region spans residues 118–197; the sequence is ESRPAKDQRS…ETSAAKGGSD (80 aa). The span at 149–165 shows a compositional bias: low complexity; the sequence is APAKKAAAKAPAKKAPA. Over residues 172–183 the composition is skewed to basic residues; that stretch reads TPAKKAPAKKAP. The segment covering 184-197 has biased composition (low complexity); it reads AKASETSAAKGGSD.

The protein belongs to the universal ribosomal protein uL22 family. As to quaternary structure, part of the 50S ribosomal subunit.

Its function is as follows. This protein binds specifically to 23S rRNA; its binding is stimulated by other ribosomal proteins, e.g. L4, L17, and L20. It is important during the early stages of 50S assembly. It makes multiple contacts with different domains of the 23S rRNA in the assembled 50S subunit and ribosome. In terms of biological role, the globular domain of the protein is located near the polypeptide exit tunnel on the outside of the subunit, while an extended beta-hairpin is found that lines the wall of the exit tunnel in the center of the 70S ribosome. The sequence is that of Large ribosomal subunit protein uL22 from Mycobacterium bovis (strain ATCC BAA-935 / AF2122/97).